Consider the following 365-residue polypeptide: tRNA/tmRNA (uracil-C(5))-methyltransferase (365 aa).

S-adenosyl-L-methionine-binding residues include Gln189, Tyr217, Asn222, Glu238, and Asp298. Cys323 functions as the Nucleophile in the catalytic mechanism. Glu357 acts as the Proton acceptor in catalysis.

Belongs to the class I-like SAM-binding methyltransferase superfamily. RNA M5U methyltransferase family. TrmA subfamily.

The catalysed reaction is uridine(54) in tRNA + S-adenosyl-L-methionine = 5-methyluridine(54) in tRNA + S-adenosyl-L-homocysteine + H(+). It catalyses the reaction uridine(341) in tmRNA + S-adenosyl-L-methionine = 5-methyluridine(341) in tmRNA + S-adenosyl-L-homocysteine + H(+). Functionally, dual-specificity methyltransferase that catalyzes the formation of 5-methyluridine at position 54 (m5U54) in all tRNAs, and that of position 341 (m5U341) in tmRNA (transfer-mRNA). The chain is tRNA/tmRNA (uracil-C(5))-methyltransferase from Shewanella denitrificans (strain OS217 / ATCC BAA-1090 / DSM 15013).